The sequence spans 87 residues: Keratin-associated protein 19-3 (87 aa).

Residues 9–82 (GGLGYGYGSF…RRPSCCGGYG (74 aa)) are 23 X 2 AA repeats of G-[YCGS].

Belongs to the KRTAP type 19 family. In terms of assembly, interacts with hair keratins. Strong expression in narrowly defined pattern restricted to the lower and middle cortical regions of the hair shaft in both developing and cycling hair. During hair follicle regression (catagen), expression levels decrease until expression is no longer detectable in follicles at resting stage (telogen).

In terms of biological role, in the hair cortex, hair keratin intermediate filaments are embedded in an interfilamentous matrix, consisting of hair keratin-associated proteins (KRTAP), which are essential for the formation of a rigid and resistant hair shaft through their extensive disulfide bond cross-linking with abundant cysteine residues of hair keratins. The matrix proteins include the high-sulfur and high-glycine-tyrosine keratins. This is Keratin-associated protein 19-3 (Krtap19-3) from Mus musculus (Mouse).